Here is a 182-residue protein sequence, read N- to C-terminus: Methyl-CpG-binding domain-containing protein 5 (182 aa).

Disordered stretches follow at residues 1-56 (MSNG…GTVD) and 80-126 (HGTP…KPLN). The MBD domain occupies 25–101 (KRATPGDDNW…ENGDSHSEHS (77 aa)). Residues 92 to 105 (ENGDSHSEHSEGRG) show a composition bias toward basic and acidic residues. Residues 106–115 (SARRQTKSNK) are compositionally biased toward basic residues.

Homodimer and heterodimer with MBD6. Interacts with DDM1 via its MBD domain. As to expression, mostly expressed in flowers, and, to a lower extent, in seedlings, buds, stems and mature seeds, but barely in roots, exclusively in root meristem cells at tips (at protein level).

It localises to the nucleus. Its subcellular location is the chromosome. In terms of biological role, transcriptional regulator that binds CpG islands in promoters where the DNA is methylated at position 5 of cytosine within CpG dinucleotides. In addition, binds specifically methylated m(5)CpNpN but not m(5)CpNpG (N is A, T or C). Plays probably a role in gene silencing. The polypeptide is Methyl-CpG-binding domain-containing protein 5 (MBD5) (Arabidopsis thaliana (Mouse-ear cress)).